A 132-amino-acid chain; its full sequence is Small ribosomal subunit protein uS8 (132 aa).

It belongs to the universal ribosomal protein uS8 family. Part of the 30S ribosomal subunit. Contacts proteins S5 and S12.

In terms of biological role, one of the primary rRNA binding proteins, it binds directly to 16S rRNA central domain where it helps coordinate assembly of the platform of the 30S subunit. In Streptomyces avermitilis (strain ATCC 31267 / DSM 46492 / JCM 5070 / NBRC 14893 / NCIMB 12804 / NRRL 8165 / MA-4680), this protein is Small ribosomal subunit protein uS8.